The sequence spans 897 residues: F-BAR domain only protein 1 (897 aa).

A mediates membrane-binding region spans residues 1-276 (MIHFFHTLQG…VGFEEYLSSL (276 aa)). An F-BAR domain is found at 2–248 (IHFFHTLQGE…NVENIGIENL (247 aa)). Residues 134 to 154 (LQKTREGYHSKCVELERLRKE) are a coiled coil. Residues 475 to 537 (VEDSGLDSPS…PNPAPSSQSN (63 aa)) form a disordered region. The segment covering 501–520 (PSSQSQSKDSINAASQSRGG) has biased composition (polar residues). The MHD domain maps to 630–894 (SWPVAAAITE…RFATGKYMAG (265 aa)).

The protein belongs to the FCHO family. May oligomerize and form homotetramer. Interacts with acvr1l/alk8; linking this receptor to clathrin-mediated endocytosis.

It is found in the membrane. The protein resides in the clathrin-coated pit. May function in an early step of clathrin-mediated endocytosis. May regulate Bmp signaling by regulating clathrin-mediated endocytosis of Bmp receptors. This Danio rerio (Zebrafish) protein is F-BAR domain only protein 1 (fcho1).